A 299-amino-acid polypeptide reads, in one-letter code: Glycine--tRNA ligase alpha subunit (299 aa).

The protein belongs to the class-II aminoacyl-tRNA synthetase family. As to quaternary structure, tetramer of two alpha and two beta subunits.

It is found in the cytoplasm. It carries out the reaction tRNA(Gly) + glycine + ATP = glycyl-tRNA(Gly) + AMP + diphosphate. This is Glycine--tRNA ligase alpha subunit from Pediococcus pentosaceus (strain ATCC 25745 / CCUG 21536 / LMG 10740 / 183-1w).